The primary structure comprises 108 residues: Succinate dehydrogenase assembly factor 4, mitochondrial (108 aa).

The segment covering 33 to 46 (NNNNNNNNNNNNNN) has biased composition (low complexity). Disordered regions lie at residues 33-59 (NNNN…KENQ) and 79-108 (NPIT…VSDF). Residues 95–108 (RYNDWERNGRVSDF) show a composition bias toward basic and acidic residues.

It belongs to the SDHAF4 family. Interacts with SdhA in its FAD-bound form.

It is found in the mitochondrion matrix. Plays an essential role in the assembly of succinate dehydrogenase (SDH), an enzyme complex (also referred to as respiratory complex II) that is a component of both the tricarboxylic acid (TCA) cycle and the mitochondrial electron transport chain, and which couples the oxidation of succinate to fumarate with the reduction of ubiquinone (coenzyme Q) to ubiquinol. Binds to the flavoprotein subunit SdhA in its FAD-bound form, blocking the generation of excess reactive oxygen species (ROS) and facilitating its assembly with the iron-sulfur protein subunit SdhB into the SDH catalytic dimer. The protein is Succinate dehydrogenase assembly factor 4, mitochondrial of Dictyostelium discoideum (Social amoeba).